Here is a 351-residue protein sequence, read N- to C-terminus: UPF0764 protein C16orf89 homolog (351 aa).

Residues 1–25 (MKSLKMLYPLFMLLVLSSKIDLSNQ) form the signal peptide.

It belongs to the UPF0764 family. In terms of assembly, homodimer.

It is found in the secreted. In Danio rerio (Zebrafish), this protein is UPF0764 protein C16orf89 homolog.